A 675-amino-acid chain; its full sequence is INO80 complex subunit D (675 aa).

5 disordered regions span residues 1 to 39 (MNNNSNNNNNNNIDQKNETTNEITNNTSNNNNIINNVNQ), 183 to 203 (TGNNNNNTTTTTTTTTTNSTP), 274 to 324 (LKQK…ERQV), 473 to 523 (DSNK…KLNK), and 627 to 675 (VPVT…TMIS). Low complexity-rich tracts occupy residues 282–318 (QQLQNQKMFEQSQQQDQQQKPVQQPIQQQQQQDQLQI), 482–519 (NNDNNINNNNNNNNNNNNNNNNNNNNNNNNNNNNNNNN), and 634–648 (NQNNQNNNNNNTNNS). Residues 664–675 (EILKDSDNTMIS) are compositionally biased toward basic and acidic residues.

It belongs to the INO80D family. In terms of assembly, component of the chromatin-remodeling INO80 complex.

The protein localises to the nucleus. In terms of biological role, putative regulatory component of the chromatin remodeling INO80 complex which is involved in transcriptional regulation, DNA replication and probably DNA repair. The protein is INO80 complex subunit D of Dictyostelium discoideum (Social amoeba).